The primary structure comprises 458 residues: Cysteine--tRNA ligase (458 aa).

A Zn(2+)-binding site is contributed by Cys-33. The short motif at 35–45 is the 'HIGH' region element; the sequence is PTVYDFAHIGN. Zn(2+)-binding residues include Cys-221, His-246, and Glu-250. The short motif at 279–283 is the 'KMSKS' region element; that stretch reads KMSKS. Lys-282 serves as a coordination point for ATP.

Belongs to the class-I aminoacyl-tRNA synthetase family. As to quaternary structure, monomer. Zn(2+) serves as cofactor.

The protein localises to the cytoplasm. The catalysed reaction is tRNA(Cys) + L-cysteine + ATP = L-cysteinyl-tRNA(Cys) + AMP + diphosphate. The sequence is that of Cysteine--tRNA ligase from Rhizobium etli (strain ATCC 51251 / DSM 11541 / JCM 21823 / NBRC 15573 / CFN 42).